A 391-amino-acid polypeptide reads, in one-letter code: ATP phosphoribosyltransferase regulatory subunit (391 aa).

The protein belongs to the class-II aminoacyl-tRNA synthetase family. HisZ subfamily. As to quaternary structure, heteromultimer composed of HisG and HisZ subunits.

The protein localises to the cytoplasm. The protein operates within amino-acid biosynthesis; L-histidine biosynthesis; L-histidine from 5-phospho-alpha-D-ribose 1-diphosphate: step 1/9. In terms of biological role, required for the first step of histidine biosynthesis. May allow the feedback regulation of ATP phosphoribosyltransferase activity by histidine. This is ATP phosphoribosyltransferase regulatory subunit from Prochlorococcus marinus (strain NATL2A).